A 201-amino-acid chain; its full sequence is Large ribosomal subunit protein uL4 (201 aa).

The segment at 51 to 73 is disordered; it reads EVTGSGKKPWRQKGTGRARAGSV.

Belongs to the universal ribosomal protein uL4 family. In terms of assembly, part of the 50S ribosomal subunit.

One of the primary rRNA binding proteins, this protein initially binds near the 5'-end of the 23S rRNA. It is important during the early stages of 50S assembly. It makes multiple contacts with different domains of the 23S rRNA in the assembled 50S subunit and ribosome. Its function is as follows. Forms part of the polypeptide exit tunnel. The polypeptide is Large ribosomal subunit protein uL4 (Erwinia tasmaniensis (strain DSM 17950 / CFBP 7177 / CIP 109463 / NCPPB 4357 / Et1/99)).